The primary structure comprises 399 residues: Tryptophan synthase beta chain (399 aa).

Position 92 is an N6-(pyridoxal phosphate)lysine (Lys92).

It belongs to the TrpB family. As to quaternary structure, tetramer of two alpha and two beta chains. Pyridoxal 5'-phosphate is required as a cofactor.

The catalysed reaction is (1S,2R)-1-C-(indol-3-yl)glycerol 3-phosphate + L-serine = D-glyceraldehyde 3-phosphate + L-tryptophan + H2O. Its pathway is amino-acid biosynthesis; L-tryptophan biosynthesis; L-tryptophan from chorismate: step 5/5. The beta subunit is responsible for the synthesis of L-tryptophan from indole and L-serine. The polypeptide is Tryptophan synthase beta chain (Bordetella bronchiseptica (strain ATCC BAA-588 / NCTC 13252 / RB50) (Alcaligenes bronchisepticus)).